The following is a 372-amino-acid chain: Partitioning defective 6 homolog beta (372 aa).

Serine 11 is subject to Phosphoserine. One can recognise a PB1 domain in the interval 16–96 (TMEVKSKFGA…PLLRIFIQKK (81 aa)). Residues 126 to 253 (RKKPHIVISM…ITVRPANQRN (128 aa)) are interaction with PARD3 and CDC42. Residues 133–150 (ISMPQDFRPVSSIIDVDI) form the Pseudo-CRIB domain. The region spanning 157 to 250 (RVRLYKYGTE…NLIITVRPAN (94 aa)) is the PDZ domain. The segment covering 253-272 (NNVVRNSRTSGSSGQSTDNS) has biased composition (polar residues). A disordered region spans residues 253-292 (NNVVRNSRTSGSSGQSTDNSLLGYPQQIEPSFEPEDEDSE).

It belongs to the PAR6 family. As to quaternary structure, interacts with PARD3. Interacts with GTP-bound forms of CDC42 and RAC1. Interacts with GTP-bound RHOQ/TC10. Interacts with PALS1. Interacts with the N-terminal part of PRKCI and PRKCZ. Part of a complex with PARD3, CDC42 or RAC1 and PRKCI or PRKCZ. Part of a complex with LLGL1 and PRKCI. Interacts with PARD3B. Interacts with ECT2. In terms of tissue distribution, expressed in pancreas and in both adult and fetal kidney. Weakly expressed in placenta and lung. Not expressed in other tissues.

The protein resides in the cytoplasm. Its subcellular location is the cell membrane. It is found in the cell junction. It localises to the tight junction. Adapter protein involved in asymmetrical cell division and cell polarization processes. Probably involved in formation of epithelial tight junctions. Association with PARD3 may prevent the interaction of PARD3 with F11R/JAM1, thereby preventing tight junction assembly. The PARD6-PARD3 complex links GTP-bound Rho small GTPases to atypical protein kinase C proteins. This chain is Partitioning defective 6 homolog beta (PARD6B), found in Homo sapiens (Human).